The sequence spans 439 residues: Innexin-19 (439 aa).

The next 4 membrane-spanning stretches (helical) occupy residues 33–53 (PLIL…GTPI), 103–123 (QWVP…CIFW), 199–219 (IVYS…FFIL), and 285–305 (VFAF…CSFI).

The protein belongs to the pannexin family.

The protein localises to the cell membrane. It is found in the cell junction. The protein resides in the gap junction. Structural component of the gap junctions that specifically coordinates left-right asymmetry in the developing nervous system. Acts by forming gap junction network linking embryonic neurons and providing electrical coupling between cells, leading to promote or inhibit AWC signaling. This Caenorhabditis briggsae protein is Innexin-19 (inx-19).